The following is a 109-amino-acid chain: uncharacterized protein (109 aa).

Residues 77–98 (TRTGHAYPRFTRPSFPSCNRNG) form a disordered region.

This is an uncharacterized protein from Homo sapiens (Human).